A 790-amino-acid chain; its full sequence is Endonuclease MutS2 (790 aa).

334 to 341 (GPNTGGKT) provides a ligand contact to ATP. In terms of domain architecture, Smr spans 715 to 790 (IDVRGQNLEE…GMGVTIVHLK (76 aa)).

The protein belongs to the DNA mismatch repair MutS family. MutS2 subfamily. As to quaternary structure, homodimer. Binds to stalled ribosomes, contacting rRNA.

Its function is as follows. Endonuclease that is involved in the suppression of homologous recombination and thus may have a key role in the control of bacterial genetic diversity. Functionally, acts as a ribosome collision sensor, splitting the ribosome into its 2 subunits. Detects stalled/collided 70S ribosomes which it binds and splits by an ATP-hydrolysis driven conformational change. Acts upstream of the ribosome quality control system (RQC), a ribosome-associated complex that mediates the extraction of incompletely synthesized nascent chains from stalled ribosomes and their subsequent degradation. Probably generates substrates for RQC. This chain is Endonuclease MutS2, found in Alkaliphilus oremlandii (strain OhILAs) (Clostridium oremlandii (strain OhILAs)).